A 379-amino-acid chain; its full sequence is Chaperone protein DnaJ (379 aa).

The region spanning 5–70 (DYYELLEVSR…QKRAAYDQFG (66 aa)) is the J domain. The segment at 135–213 (GKEVEITVPR…CHGQGRVRES (79 aa)) adopts a CR-type zinc-finger fold. Zn(2+) contacts are provided by C148, C151, C165, C168, C187, C190, C201, and C204. 4 CXXCXGXG motif repeats span residues 148-155 (CTVCEGSG), 165-172 (CETCQGMG), 187-194 (CPTCHGEG), and 201-208 (CASCHGQG).

Belongs to the DnaJ family. As to quaternary structure, homodimer. Requires Zn(2+) as cofactor.

Its subcellular location is the cytoplasm. Participates actively in the response to hyperosmotic and heat shock by preventing the aggregation of stress-denatured proteins and by disaggregating proteins, also in an autonomous, DnaK-independent fashion. Unfolded proteins bind initially to DnaJ; upon interaction with the DnaJ-bound protein, DnaK hydrolyzes its bound ATP, resulting in the formation of a stable complex. GrpE releases ADP from DnaK; ATP binding to DnaK triggers the release of the substrate protein, thus completing the reaction cycle. Several rounds of ATP-dependent interactions between DnaJ, DnaK and GrpE are required for fully efficient folding. Also involved, together with DnaK and GrpE, in the DNA replication of plasmids through activation of initiation proteins. The polypeptide is Chaperone protein DnaJ (Legionella pneumophila (strain Corby)).